A 599-amino-acid polypeptide reads, in one-letter code: Aspartate--tRNA(Asp/Asn) ligase (599 aa).

Glutamate 180 contacts L-aspartate. An aspartate region spans residues glutamine 204–lysine 207. Arginine 226 contributes to the L-aspartate binding site. ATP contacts are provided by residues arginine 226–glutamate 228 and glutamine 235. Histidine 457 serves as a coordination point for L-aspartate. Glutamate 491 serves as a coordination point for ATP. Position 498 (arginine 498) interacts with L-aspartate. Glycine 543–arginine 546 contributes to the ATP binding site. Residues lysine 565–asparagine 599 are disordered. The span at valine 590–asparagine 599 shows a compositional bias: acidic residues.

The protein belongs to the class-II aminoacyl-tRNA synthetase family. Type 1 subfamily. In terms of assembly, homodimer.

Its subcellular location is the cytoplasm. The catalysed reaction is tRNA(Asx) + L-aspartate + ATP = L-aspartyl-tRNA(Asx) + AMP + diphosphate. Functionally, aspartyl-tRNA synthetase with relaxed tRNA specificity since it is able to aspartylate not only its cognate tRNA(Asp) but also tRNA(Asn). Reaction proceeds in two steps: L-aspartate is first activated by ATP to form Asp-AMP and then transferred to the acceptor end of tRNA(Asp/Asn). This chain is Aspartate--tRNA(Asp/Asn) ligase, found in Bifidobacterium longum (strain NCC 2705).